Reading from the N-terminus, the 291-residue chain is Trimeric intracellular cation channel type B (291 aa).

At Met-1–Pro-19 the chain is on the lumenal side. The helical transmembrane segment at Phe-20–Val-33 threads the bilayer. At Lys-34–Ser-50 the chain is on the cytoplasmic side. The helical transmembrane segment at Trp-51–Ala-70 threads the bilayer. The Lumenal portion of the chain corresponds to Glu-71 to Asn-82. A helical transmembrane segment spans residues Ile-83–Asp-99. Residues Leu-100 to Gly-104 are Cytoplasmic-facing. Residues Tyr-105–Thr-121 form a helical membrane-spanning segment. Residues Lys-118 and Arg-122 each contribute to the a 1,2-diacyl-sn-glycero-3-phospho-(1D-myo-inositol-4,5-bisphosphate) site. The Lumenal portion of the chain corresponds to Arg-122–Asn-139. A helical transmembrane segment spans residues Gly-140 to Thr-156. At Ile-157–Met-179 the chain is on the cytoplasmic side. A helical membrane pass occupies residues Ser-180–Phe-195. Over Gln-196–Asn-207 the chain is Lumenal. A helical transmembrane segment spans residues Leu-208–Gln-227. Topologically, residues Thr-228–Glu-291 are cytoplasmic. A disordered region spans residues Lys-256–Glu-291. A Phosphoserine modification is found at Ser-262.

Belongs to the TMEM38 family. Homotrimer; conformation seems to be controled by binding to diacylglycerol (DAG).

It localises to the endoplasmic reticulum membrane. The catalysed reaction is K(+)(in) = K(+)(out). Channel activity is activated by increased cytosolic Ca(2+) levels and blocked by luminal high Ca(2+) levels. Functionally, intracellular monovalent cation channel required for maintenance of rapid intracellular calcium release. Acts as a potassium counter-ion channel that functions in synchronization with calcium release from intracellular stores. Activated by increased cytosolic Ca(2+) levels. The chain is Trimeric intracellular cation channel type B from Homo sapiens (Human).